The sequence spans 391 residues: Putative protein PLEKHA9 (391 aa).

This chain is Putative protein PLEKHA9 (PLEKHA8P1), found in Homo sapiens (Human).